A 438-amino-acid polypeptide reads, in one-letter code: V-type ATP synthase beta chain (438 aa).

Belongs to the ATPase alpha/beta chains family.

In terms of biological role, produces ATP from ADP in the presence of a proton gradient across the membrane. The V-type beta chain is a regulatory subunit. The sequence is that of V-type ATP synthase beta chain from Chlamydia abortus (strain DSM 27085 / S26/3) (Chlamydophila abortus).